Reading from the N-terminus, the 101-residue chain is Small ribosomal subunit protein uS14 (101 aa).

It belongs to the universal ribosomal protein uS14 family. Part of the 30S ribosomal subunit. Contacts proteins S3 and S10.

Functionally, binds 16S rRNA, required for the assembly of 30S particles and may also be responsible for determining the conformation of the 16S rRNA at the A site. This Klebsiella pneumoniae (strain 342) protein is Small ribosomal subunit protein uS14.